The chain runs to 205 residues: Imidazoleglycerol-phosphate dehydratase (205 aa).

The protein belongs to the imidazoleglycerol-phosphate dehydratase family.

The protein localises to the cytoplasm. The enzyme catalyses D-erythro-1-(imidazol-4-yl)glycerol 3-phosphate = 3-(imidazol-4-yl)-2-oxopropyl phosphate + H2O. The protein operates within amino-acid biosynthesis; L-histidine biosynthesis; L-histidine from 5-phospho-alpha-D-ribose 1-diphosphate: step 6/9. This chain is Imidazoleglycerol-phosphate dehydratase, found in Chloroflexus aurantiacus (strain ATCC 29366 / DSM 635 / J-10-fl).